A 263-amino-acid polypeptide reads, in one-letter code: Tryptophan synthase alpha chain (263 aa).

Catalysis depends on proton acceptor residues Glu49 and Asp60.

Belongs to the TrpA family. In terms of assembly, tetramer of two alpha and two beta chains.

The catalysed reaction is (1S,2R)-1-C-(indol-3-yl)glycerol 3-phosphate + L-serine = D-glyceraldehyde 3-phosphate + L-tryptophan + H2O. It functions in the pathway amino-acid biosynthesis; L-tryptophan biosynthesis; L-tryptophan from chorismate: step 5/5. The alpha subunit is responsible for the aldol cleavage of indoleglycerol phosphate to indole and glyceraldehyde 3-phosphate. The protein is Tryptophan synthase alpha chain of Roseobacter denitrificans (strain ATCC 33942 / OCh 114) (Erythrobacter sp. (strain OCh 114)).